The chain runs to 397 residues: Argininosuccinate synthase (397 aa).

9 to 17 (AYSGGLDTS) contributes to the ATP binding site. Residue Y87 participates in L-citrulline binding. G117 lines the ATP pocket. L-aspartate-binding residues include T119, N123, and D124. N123 lines the L-citrulline pocket. 5 residues coordinate L-citrulline: R127, S175, S184, E257, and Y269.

The protein belongs to the argininosuccinate synthase family. Type 1 subfamily. Homotetramer.

The protein localises to the cytoplasm. It catalyses the reaction L-citrulline + L-aspartate + ATP = 2-(N(omega)-L-arginino)succinate + AMP + diphosphate + H(+). It functions in the pathway amino-acid biosynthesis; L-arginine biosynthesis; L-arginine from L-ornithine and carbamoyl phosphate: step 2/3. The protein is Argininosuccinate synthase of Dictyoglomus turgidum (strain DSM 6724 / Z-1310).